The sequence spans 548 residues: MSQQAGNAQRGRFDEEPMSLGEKISHRMDQLKEIVSSSCPCAGKFPPVAIVLIVALIILGVIIAVPLVIFLSPSAQAMSSGTRDLSSHSIRHPKVWPKTEKVQDDDLSAIQMTSLLPPNVSTCSGFGFACTGSIDMIIPSSKRCDGLKDCSDGSDEENCKECQSIYSCRAHIEEESEKKDKTSVLPTLICLTAEKLCNGVENCPDGSDEASCRSKCSKDQFKCSGSDACLPISVKCDGVSDCENESDESNCNKCQKGAHKCGKNCIKASKVCDGIPDCDDGSDEHQCDCKTCSGSEKALCEDGTCIMRSQVCDGKHDCLDGIDEENCPGSCSNERFSSKLKLLTCDDGNQYSEVEACSGLVEACELNCPKCDPKHTFTCPAVGGIHNKCIKRSKVCDGIFDCEDGADEKKCTPVKECVVESSIQFTCDNKCLESSRRCDGVWDCEDKSDEKGCDKCPSRSFKCSADKKCLPFHTRCNGVAECSDGSDEHKCSCQECLGTHHDTYMCSESNRCLKRGEVCSPYSMCPNATYIDKAYCASLALKNSGLRP.

Residues 1-49 (MSQQAGNAQRGRFDEEPMSLGEKISHRMDQLKEIVSSSCPCAGKFPPVA) are Cytoplasmic-facing. The chain crosses the membrane as a helical; Signal-anchor for type II membrane protein span at residues 50-70 (IVLIVALIILGVIIAVPLVIF). The Extracellular segment spans residues 71-548 (LSPSAQAMSS…LALKNSGLRP (478 aa)). Asn119 is a glycosylation site (N-linked (GlcNAc...) asparagine). 8 consecutive LDL-receptor class A domains span residues 122 to 160 (TCSG…ENCK), 161 to 213 (ECQS…ASCR), 215 to 252 (KCSK…SNCN), 253 to 288 (KCQK…HQCD), 291 to 328 (TCSG…ENCP), 370 to 412 (KCDP…KKCT), 416 to 454 (ECVV…KGCD), and 455 to 492 (KCPS…HKCS). 23 cysteine pairs are disulfide-bonded: Cys130-Cys150, Cys144-Cys159, Cys162-Cys190, Cys168-Cys203, Cys197-Cys212, Cys216-Cys229, Cys223-Cys242, Cys236-Cys251, Cys254-Cys265, Cys261-Cys278, Cys272-Cys287, Cys292-Cys305, Cys300-Cys318, Cys312-Cys327, Cys371-Cys389, Cys379-Cys402, Cys396-Cys411, Cys417-Cys431, Cys427-Cys444, Cys438-Cys453, Cys456-Cys469, Cys463-Cys482, and Cys476-Cys491. A glycan (N-linked (GlcNAc...) asparagine) is linked at Asn244. N-linked (GlcNAc...) asparagine glycosylation occurs at Asn527.

It localises to the cell membrane. The protein resides in the endosome membrane. In terms of biological role, probable receptor which is required for the oocyte-to-zygote transition although its exact function is controversial. Redundantly with egg-1, seems to be required for fertilization probably by promoting the interaction or fusion between sperm and oocyte. Conversely, shown to be dispensable for fertilization but required together with egg-1 for the formation of a continuous and cohesive eggshell chitin layer by maintaining a homogenous distribution of chitin synthase chs-1 at the unfertilized oocyte cell membrane. Appears to recruit or maintain together to the unfertilized oocyte cortex several proteins including chs-1, kinase mbk-2 and pseudophosphatase egg-3, and possibly egg-4 and egg-5. This is LDL receptor repeat-containing protein egg-2 from Caenorhabditis elegans.